The following is a 409-amino-acid chain: ORC1-type DNA replication protein 1 (409 aa).

ATP contacts are provided by residues 63–67 (TGKTA), Tyr206, and Arg218.

This sequence belongs to the CDC6/cdc18 family.

In terms of biological role, involved in regulation of DNA replication. In Archaeoglobus fulgidus (strain ATCC 49558 / DSM 4304 / JCM 9628 / NBRC 100126 / VC-16), this protein is ORC1-type DNA replication protein 1 (cdc6-1).